Here is a 611-residue protein sequence, read N- to C-terminus: MSKIIGIDLGTTNSCVAVMEGGEPKVIPNPEGNRTTPSVVAFKNEERQVGEVAKRQAITNPNTIMSVKRHMGTDYKVEVEGKDYTPQEISAIILQNLKASAEAYLGETVTKAVITVPAYFNDAERQATKDAGRIAGLEVERIINEPTAAALAYGLEKQDEEQKILVYDLGGGTFDVSILELADGTFEVISTAGDNRLGGDDFDQVIIDHLVAEFKKENNIDLSQDKMALQRLKDAAEKAKKDLSGVTQTQISLPFISAGAAGPLHLELTLTRAKFEELSAGLVERTLEPTRRALKDAGFAPSELDKVILVGGSTRIPAVQEAIKRETGKEPYKGVNPDEVVALGAAVQGGVLTGDVEGVLLLDVTPLSLGIETMGGVFTKLIERNTTIPTSKSQVFSTAADNQPAVDIHVLQGERPMSADNKTLGRFQLTDLPPAPRGIPQIEVTFDIDANGIVNVRAKDLGTSKEQAITIQSSSGLSDEEVERMVQEAEANADADQKRKEEVELRNEADQLVFQTDKVVKDLEGKVDAAEVAKATEAKEALQAAIEKNELEEIRAKKDALQEIVQQLTVKLYEQAQAAAGQAEGAQGAQDAGTKKDNVVDAEFEEVKEDK.

Position 173 is a phosphothreonine; by autocatalysis (T173). Residues 577 to 592 (QAAAGQAEGAQGAQDA) are compositionally biased toward low complexity. Residues 577 to 611 (QAAAGQAEGAQGAQDAGTKKDNVVDAEFEEVKEDK) are disordered. Residues 600 to 611 (VDAEFEEVKEDK) are compositionally biased toward acidic residues.

This sequence belongs to the heat shock protein 70 family.

In terms of biological role, acts as a chaperone. This Bacillus cereus (strain G9842) protein is Chaperone protein DnaK.